A 179-amino-acid chain; its full sequence is ATP synthase subunit delta (179 aa).

The protein belongs to the ATPase delta chain family. F-type ATPases have 2 components, F(1) - the catalytic core - and F(0) - the membrane proton channel. F(1) has five subunits: alpha(3), beta(3), gamma(1), delta(1), epsilon(1). F(0) has three main subunits: a(1), b(2) and c(10-14). The alpha and beta chains form an alternating ring which encloses part of the gamma chain. F(1) is attached to F(0) by a central stalk formed by the gamma and epsilon chains, while a peripheral stalk is formed by the delta and b chains.

It is found in the cell inner membrane. Functionally, f(1)F(0) ATP synthase produces ATP from ADP in the presence of a proton or sodium gradient. F-type ATPases consist of two structural domains, F(1) containing the extramembraneous catalytic core and F(0) containing the membrane proton channel, linked together by a central stalk and a peripheral stalk. During catalysis, ATP synthesis in the catalytic domain of F(1) is coupled via a rotary mechanism of the central stalk subunits to proton translocation. This protein is part of the stalk that links CF(0) to CF(1). It either transmits conformational changes from CF(0) to CF(1) or is implicated in proton conduction. This is ATP synthase subunit delta from Burkholderia thailandensis (strain ATCC 700388 / DSM 13276 / CCUG 48851 / CIP 106301 / E264).